Here is a 322-residue protein sequence, read N- to C-terminus: Lipoyl synthase (322 aa).

The [4Fe-4S] cluster site is built by cysteine 66, cysteine 71, cysteine 77, cysteine 92, cysteine 96, cysteine 99, and serine 306. In terms of domain architecture, Radical SAM core spans 78–295 (FSKGTATFMI…EKEAYELGFS (218 aa)).

It belongs to the radical SAM superfamily. Lipoyl synthase family. [4Fe-4S] cluster serves as cofactor.

The protein localises to the cytoplasm. It carries out the reaction [[Fe-S] cluster scaffold protein carrying a second [4Fe-4S](2+) cluster] + N(6)-octanoyl-L-lysyl-[protein] + 2 oxidized [2Fe-2S]-[ferredoxin] + 2 S-adenosyl-L-methionine + 4 H(+) = [[Fe-S] cluster scaffold protein] + N(6)-[(R)-dihydrolipoyl]-L-lysyl-[protein] + 4 Fe(3+) + 2 hydrogen sulfide + 2 5'-deoxyadenosine + 2 L-methionine + 2 reduced [2Fe-2S]-[ferredoxin]. The protein operates within protein modification; protein lipoylation via endogenous pathway; protein N(6)-(lipoyl)lysine from octanoyl-[acyl-carrier-protein]: step 2/2. Catalyzes the radical-mediated insertion of two sulfur atoms into the C-6 and C-8 positions of the octanoyl moiety bound to the lipoyl domains of lipoate-dependent enzymes, thereby converting the octanoylated domains into lipoylated derivatives. This Neisseria meningitidis serogroup C (strain 053442) protein is Lipoyl synthase.